A 1464-amino-acid chain; its full sequence is Sister chromatid cohesion protein PDS5 homolog B-B (1464 aa).

The stretch at 383 to 419 is one HEAT repeat; sequence LLVNDQLLNFVRERTLDKRWRVRKEAMMGLAQIYKKY. The tract at residues 1126–1464 is disordered; that stretch reads KSTNVLGAVN…MKSELEGPLL (339 aa). Residues 1137–1155 show a composition bias toward polar residues; sequence PLSSAGKQMQSKSSRMETV. Low complexity predominate over residues 1156 to 1168; sequence SNASSGSNPSSPG. Residues 1177–1186 are compositionally biased toward acidic residues; the sequence is TELDQIEYED. Basic and acidic residues-rich tracts occupy residues 1197–1215, 1234–1244, and 1265–1274; these read KKSD…VEKP, ELSKPAQEPKS, and WQEKRLKEDL. Residues 1286–1295 are compositionally biased toward basic residues; sequence KKGRRGRPPK. The segment at residues 1287-1299 is a DNA-binding region (a.T hook 1); that stretch reads KGRRGRPPKSAKM. The segment covering 1325–1342 has biased composition (acidic residues); that stretch reads PTDEEDHLEISEEQDSEN. A compositionally biased stretch (basic residues) spans 1347-1357; sequence RKGRGSSKKTP. Residues 1359 to 1373 are compositionally biased toward polar residues; it reads KSDSTDSALDTSRPT. 2 DNA-binding regions (a.T hook) span residues 1375-1387 and 1391-1403; these read QKRR…TPTV and KSHV…VVSK. Basic residues predominate over residues 1390 to 1400; it reads KKSHVGRPRKV. Acidic residues predominate over residues 1425–1435; the sequence is SNEEETADEEV. Over residues 1441–1453 the composition is skewed to basic residues; it reads GRRRTAKKRRWIQ. The segment covering 1455 to 1464 has biased composition (basic and acidic residues); it reads MKSELEGPLL.

It belongs to the PDS5 family. As to quaternary structure, interacts with the cohesin complex. In terms of processing, phosphorylated in mitotic cells.

The protein resides in the nucleus. In terms of biological role, plays a role in androgen-induced proliferative arrest. Required for maintenance of sister chromatid cohesion during mitosis. This is Sister chromatid cohesion protein PDS5 homolog B-B (pds5b-b) from Xenopus laevis (African clawed frog).